We begin with the raw amino-acid sequence, 299 residues long: Mitochondrial 2-oxodicarboxylate carrier (299 aa).

Solcar repeat units lie at residues 11–100 (REAS…YKKL), 107–196 (SPAL…VKNM), and 205–294 (LEFL…TYSW). A run of 6 helical transmembrane segments spans residues 17-37 (IVAG…LDVV), 70-89 (FGFY…KRAV), 113-133 (TIAG…FEVV), 167-187 (GLNK…MVYF), 205-225 (LEFL…SVIN), and 277-297 (LGPG…WLQE).

Belongs to the mitochondrial carrier (TC 2.A.29) family.

The protein localises to the mitochondrion inner membrane. It carries out the reaction 2-oxoadipate(in) + 2-oxoglutarate(out) = 2-oxoadipate(out) + 2-oxoglutarate(in). It catalyses the reaction hexanedioate(in) + 2-oxoglutarate(out) = hexanedioate(out) + 2-oxoglutarate(in). The enzyme catalyses L-2-aminoadipate(in) + 2-oxoglutarate(out) = L-2-aminoadipate(out) + 2-oxoglutarate(in). The catalysed reaction is glutarate(in) + 2-oxoglutarate(out) = glutarate(out) + 2-oxoglutarate(in). It carries out the reaction 2-oxoheptanedioate(in) + 2-oxoglutarate(out) = 2-oxoheptanedioate(out) + 2-oxoglutarate(in). It catalyses the reaction heptanedioate(in) + 2-oxoglutarate(out) = heptanedioate(out) + 2-oxoglutarate(in). The enzyme catalyses citrate(in) + 2-oxoglutarate(out) = citrate(out) + 2-oxoglutarate(in). Functionally, transports dicarboxylates across the inner membranes of mitochondria by a counter-exchange mechanism. Can transport 2-oxoadipate (2-oxohexanedioate), 2-oxoglutarate, adipate (hexanedioate), glutarate, and to a lesser extent, pimelate (heptanedioate), 2-oxopimelate (2-oxoheptanedioate), 2-aminoadipate (2-aminohexanedioate), oxaloacetate, and citrate. Plays a central role in catabolism of lysine, hydroxylysine, and tryptophan, by transporting common metabolite intermediates (such as 2-oxoadipate) into the mitochondria, where it is converted into acetyl-CoA and can enter the citric acid (TCA) cycle. The chain is Mitochondrial 2-oxodicarboxylate carrier (SLC25A21) from Pongo abelii (Sumatran orangutan).